The chain runs to 205 residues: Protein PYRAB00100 (205 aa).

Positions 7–201 constitute an AMMECR1 domain; the sequence is EWGEFLVRLA…EEYPRGPVRR (195 aa).

The chain is Protein PYRAB00100 from Pyrococcus abyssi (strain GE5 / Orsay).